The chain runs to 543 residues: Formin-binding protein 1-like (543 aa).

Residues 1–263 (MSWGTELWDQ…AAKSVDERRD (263 aa)) form the F-BAR domain. 2 coiled-coil regions span residues 66-258 (FTSC…AKSV) and 334-426 (LEDF…QRSE). The region spanning 339 to 416 (HLPPEQRRKR…IHKNEGWLSE (78 aa)) is the REM-1 domain. Positions 424–467 (RSERRHSAEANHLVAQGRESPEGSYTEDANQEGRVQPQHHAHPE) are disordered. Positions 479–540 (PAIGHCKSLY…PTSYIEITLE (62 aa)) constitute an SH3 domain.

Belongs to the FNBP1 family. In terms of assembly, homodimerizes, the dimers can polymerize end-to-end to form filamentous structures. Interacts with GTP-bound cdc42 and wasl/n-wasp.

The protein localises to the cytoplasm. It localises to the cytoskeleton. The protein resides in the cell cortex. It is found in the cytoplasmic vesicle. Its subcellular location is the cell membrane. Required to coordinate membrane tubulation with reorganization of the actin cytoskeleton during endocytosis. Essential for autophagy of intracellular bacterial pathogens. Promotes cdc42-induced actin polymerization by activating the wasl-waspip complex, the predominant form of wasl/n-wasp in cells. The chain is Formin-binding protein 1-like (fnbp1l) from Xenopus laevis (African clawed frog).